The primary structure comprises 97 residues: Small ribosomal subunit protein bS6 (97 aa).

It belongs to the bacterial ribosomal protein bS6 family.

Its function is as follows. Binds together with bS18 to 16S ribosomal RNA. This Limosilactobacillus fermentum (strain NBRC 3956 / LMG 18251) (Lactobacillus fermentum) protein is Small ribosomal subunit protein bS6.